The following is an 878-amino-acid chain: Aconitate hydratase A (878 aa).

Residues cysteine 426, cysteine 492, and cysteine 495 each coordinate [4Fe-4S] cluster.

Belongs to the aconitase/IPM isomerase family. Monomer. It depends on [4Fe-4S] cluster as a cofactor.

The enzyme catalyses citrate = D-threo-isocitrate. The catalysed reaction is (2S,3R)-3-hydroxybutane-1,2,3-tricarboxylate = 2-methyl-cis-aconitate + H2O. The protein operates within carbohydrate metabolism; tricarboxylic acid cycle; isocitrate from oxaloacetate: step 2/2. It functions in the pathway organic acid metabolism; propanoate degradation. In terms of biological role, involved in the catabolism of short chain fatty acids (SCFA) via the tricarboxylic acid (TCA)(acetyl degradation route) and probably the 2-methylcitrate cycle I (propionate degradation route). Catalyzes the reversible isomerization of citrate to isocitrate via cis-aconitate. Could catalyze the hydration of 2-methyl-cis-aconitate to yield (2R,3S)-2-methylisocitrate. The apo form of AcnA functions as a RNA-binding regulatory protein. The polypeptide is Aconitate hydratase A (acnA) (Rickettsia felis (strain ATCC VR-1525 / URRWXCal2) (Rickettsia azadi)).